A 330-amino-acid polypeptide reads, in one-letter code: Aspartate--ammonia ligase (330 aa).

The protein belongs to the class-II aminoacyl-tRNA synthetase family. AsnA subfamily.

Its subcellular location is the cytoplasm. The catalysed reaction is L-aspartate + NH4(+) + ATP = L-asparagine + AMP + diphosphate + H(+). It participates in amino-acid biosynthesis; L-asparagine biosynthesis; L-asparagine from L-aspartate (ammonia route): step 1/1. This chain is Aspartate--ammonia ligase, found in Yersinia enterocolitica serotype O:8 / biotype 1B (strain NCTC 13174 / 8081).